We begin with the raw amino-acid sequence, 231 residues long: PX domain-containing protein 1 (231 aa).

In terms of domain architecture, PX spans 1–134 (MASAVFEGTS…TFFERSPLDQ (134 aa)).

In Homo sapiens (Human), this protein is PX domain-containing protein 1 (PXDC1).